A 758-amino-acid chain; its full sequence is Vitamin K-dependent gamma-carboxylase (758 aa).

The interval 1 to 34 (MAVSARPARAPRGPDKVKKDKAAQTSGPRQGSQM) is disordered. Ala-2 carries the post-translational modification N-acetylalanine. Residues 2-60 (AVSARPARAPRGPDKVKKDKAAQTSGPRQGSQMGKLLGFEWTDVSSWERLVTLLNRPTD) are Cytoplasmic-facing. The segment covering 12–22 (RGPDKVKKDKA) has biased composition (basic and acidic residues). The segment covering 23–33 (AQTSGPRQGSQ) has biased composition (polar residues). The chain crosses the membrane as a helical span at residues 61–81 (PASLAVFRFLFGLMMVLDIPQ). Topologically, residues 82–113 (ERGLSSLDRRYLDGLEVCRFPLLDALQPLPLD) are lumenal. Cysteines 99 and 450 form a disulfide. The chain crosses the membrane as a helical span at residues 114–134 (WMYLVYTIMFLGALGMMLGLC). At 135 to 136 (YR) the chain is on the cytoplasmic side. A helical transmembrane segment spans residues 137 to 157 (ISCVLFLLPYWYVFLLDKTSW). At 158-292 (NNHSYLYGLL…VSYFHCMNSQ (135 aa)) the chain is on the lumenal side. A helical membrane pass occupies residues 293–313 (LFSIGMFPYVMLASSPLFCSP). The Cytoplasmic segment spans residues 314 to 361 (EWPRKLVAHCPKKLQELLPLRTAPQPSTSCMYKRSRARGSQKPGLRHQ). The helical transmembrane segment at 362–382 (LSTAFTLLYLLEQLFLPYSHF) threads the bilayer. At 383–758 (LTQGYNNWTN…PDSHPVHSEF (376 aa)) the chain is on the lumenal side. A disordered region spans residues 726-758 (RPFEPAGEPSPVNTDSSNPNPPEPDSHPVHSEF). Basic and acidic residues predominate over residues 749–758 (PDSHPVHSEF).

This sequence belongs to the vitamin K-dependent gamma-carboxylase family. As to quaternary structure, monomer. May interact with CALU.

It is found in the endoplasmic reticulum membrane. The enzyme catalyses 4-carboxy-L-glutamyl-[protein] + 2,3-epoxyphylloquinone + H2O + H(+) = phylloquinol + L-glutamyl-[protein] + CO2 + O2. Its function is as follows. Mediates the vitamin K-dependent carboxylation of glutamate residues to calcium-binding gamma-carboxyglutamate (Gla) residues with the concomitant conversion of the reduced hydroquinone form of vitamin K to vitamin K epoxide. Catalyzes gamma-carboxylation of various proteins, such as blood coagulation factors (F2, F7, F9 and F10), osteocalcin (BGLAP) or matrix Gla protein (MGP). The chain is Vitamin K-dependent gamma-carboxylase (GGCX) from Ovis aries (Sheep).